The sequence spans 407 residues: 4-hydroxy-3-methylbut-2-en-1-yl diphosphate synthase (ferredoxin) (407 aa).

Residues C316, C319, C350, and E357 each contribute to the [4Fe-4S] cluster site.

This sequence belongs to the IspG family. Requires [4Fe-4S] cluster as cofactor.

The catalysed reaction is (2E)-4-hydroxy-3-methylbut-2-enyl diphosphate + 2 oxidized [2Fe-2S]-[ferredoxin] + H2O = 2-C-methyl-D-erythritol 2,4-cyclic diphosphate + 2 reduced [2Fe-2S]-[ferredoxin] + H(+). The protein operates within isoprenoid biosynthesis; isopentenyl diphosphate biosynthesis via DXP pathway; isopentenyl diphosphate from 1-deoxy-D-xylulose 5-phosphate: step 5/6. In terms of biological role, converts 2C-methyl-D-erythritol 2,4-cyclodiphosphate (ME-2,4cPP) into 1-hydroxy-2-methyl-2-(E)-butenyl 4-diphosphate. This chain is 4-hydroxy-3-methylbut-2-en-1-yl diphosphate synthase (ferredoxin), found in Prochlorococcus marinus (strain SARG / CCMP1375 / SS120).